Consider the following 170-residue polypeptide: Peptide deformylase (170 aa).

Residues Cys92 and His134 each coordinate Fe cation. Residue Glu135 is part of the active site. His138 provides a ligand contact to Fe cation.

This sequence belongs to the polypeptide deformylase family. Requires Fe(2+) as cofactor.

It carries out the reaction N-terminal N-formyl-L-methionyl-[peptide] + H2O = N-terminal L-methionyl-[peptide] + formate. In terms of biological role, removes the formyl group from the N-terminal Met of newly synthesized proteins. Requires at least a dipeptide for an efficient rate of reaction. N-terminal L-methionine is a prerequisite for activity but the enzyme has broad specificity at other positions. This chain is Peptide deformylase, found in Chromohalobacter salexigens (strain ATCC BAA-138 / DSM 3043 / CIP 106854 / NCIMB 13768 / 1H11).